We begin with the raw amino-acid sequence, 1058 residues long: Lon protease homolog, mitochondrial (1058 aa).

A mitochondrion-targeting transit peptide spans 1-47; that stretch reads MLTRIRNAGVGGNAARRVRLLAGYTGARMAHAAALNSTTGAGGAARA. Residues 72–151 are disordered; the sequence is GGQCILKQDR…RSNPPSEGEV (80 aa). Composition is skewed to basic and acidic residues over residues 78 to 97 and 106 to 118; these read KQDR…RAEE and DEEA…EEQA. The span at 129–142 shows a compositional bias: gly residues; it reads GSGGSASSAGGGGR. In terms of domain architecture, Lon N-terminal spans 158–412; the sequence is LMVLPMSNRP…KALVFIKKEV (255 aa). An ATP-binding site is contributed by 564–571; it reads GPPGVGKT. Residues 778 to 814 are disordered; the sequence is TPKSAPAETNIEPENGKPDASAKPLTNNLPAPEPLNI. The region spanning 844 to 1030 is the Lon proteolytic domain; it reads KTPAGVVMGL…DDVFNVLFGS (187 aa). Catalysis depends on residues serine 936 and lysine 979.

It belongs to the peptidase S16 family. As to quaternary structure, homohexamer or homoheptamer. Organized in a ring with a central cavity.

It is found in the mitochondrion matrix. It carries out the reaction Hydrolysis of proteins in presence of ATP.. Its function is as follows. ATP-dependent serine protease that mediates the selective degradation of misfolded, unassembled or oxidatively damaged polypeptides as well as certain short-lived regulatory proteins in the mitochondrial matrix. May also have a chaperone function in the assembly of inner membrane protein complexes. Participates in the regulation of mitochondrial gene expression and in the maintenance of the integrity of the mitochondrial genome. Binds to mitochondrial DNA in a site-specific manner. The chain is Lon protease homolog, mitochondrial from Eremothecium gossypii (strain ATCC 10895 / CBS 109.51 / FGSC 9923 / NRRL Y-1056) (Yeast).